A 434-amino-acid polypeptide reads, in one-letter code: CC-adding tRNA nucleotidyltransferase (434 aa).

CTP is bound at residue 19-22 (GAVR). Mg(2+) is bound by residues Asp-32 and Asp-34. CTP contacts are provided by residues 90-91 (RD), Asn-95, 130-139 (DHLRSLRGVR), and Arg-175.

Belongs to the tRNA nucleotidyltransferase/poly(A) polymerase family. Mg(2+) serves as cofactor.

It carries out the reaction a tRNA precursor + 2 CTP = a tRNA with a 3' CC end + 2 diphosphate. Its function is as follows. tRNA nucleotidyltransferase involved in the synthesis of the tRNA CCA terminus. Adds the two cytidine residues to tRNA. The sequence is that of CC-adding tRNA nucleotidyltransferase from Thermus thermophilus (strain ATCC BAA-163 / DSM 7039 / HB27).